Here is a 563-residue protein sequence, read N- to C-terminus: Arginine--tRNA ligase (563 aa).

The 'HIGH' region signature appears at 121-131; sequence PNIAKPFSIGH.

This sequence belongs to the class-I aminoacyl-tRNA synthetase family. In terms of assembly, monomer.

The protein localises to the cytoplasm. It carries out the reaction tRNA(Arg) + L-arginine + ATP = L-arginyl-tRNA(Arg) + AMP + diphosphate. The polypeptide is Arginine--tRNA ligase (Streptococcus equi subsp. equi (strain 4047)).